We begin with the raw amino-acid sequence, 70 residues long: Antimicrobial peptide VpCT1 (70 aa).

The signal sequence occupies residues 1–23 (MKNQFAVLLVALVLLQLFSQSEA). L36 carries the post-translational modification Leucine amide. A propeptide spanning residues 37–70 (GKRGLRNFDLEQMDDTYEPELSEADLRYLQDLLR) is cleaved from the precursor.

The protein belongs to the non-disulfide-bridged peptide (NDBP) superfamily. Short antimicrobial peptide (group 4) family. As to expression, expressed by the venom gland.

It localises to the secreted. The protein resides in the target cell membrane. Functionally, antimicrobial peptide with potent activity against bacteria S.aureus (MIC=4.7 uM) and E.coli (MIC=31.5 uM), and pathogenic yeasts C.albicans (MIC=25 uM) and C.glabrata (MIC=12.5 uM). Is not very effective against P.aeruginosa (MIC=150 and &gt;300 uM). Also provokes moderate hemolysis on human erythrocytes (HC(50)=10.5 uM). The protein is Antimicrobial peptide VpCT1 of Mesomexovis punctatus (Scorpion).